The chain runs to 1777 residues: FERM and PDZ domain-containing protein 3 (1777 aa).

The 78-residue stretch at 21–98 (QVTVHRDPIY…FIVLTVLHTH (78 aa)) folds into the PDZ domain. The 315-residue stretch at 147–461 (NVLKVFLENG…GYCRLLLDSR (315 aa)) folds into the FERM domain. 7 disordered regions span residues 491-520 (TGGH…TPPP), 555-574 (ETRP…QGYE), 622-697 (QLGP…GRHL), 832-871 (SLGR…QGER), 1014-1216 (SAPE…PFRL), 1309-1346 (RPQA…LSSP), and 1732-1765 (QQQQ…ATVM). A compositionally biased stretch (polar residues) spans 502 to 511 (YVGSVGTSPR). Residues 555-564 (ETRPRTKSDP) show a composition bias toward basic and acidic residues. Positions 649 to 659 (SEEEEEEEDET) are enriched in acidic residues. 4 stretches are compositionally biased toward polar residues: residues 840 to 850 (PSLQPIATGQS), 1015 to 1035 (APET…SSPR), 1046 to 1056 (HLSQQEDSLPV), and 1094 to 1111 (LQKQ…QLES). Positions 1134-1168 (QSPSCQSRSHSPSCQPHGHSPSSQSRGQSPSCQPR) are enriched in low complexity. Residues 1172–1202 (PLRSQAASRQVSTMPSRKLETTLNGAHSTSE) are compositionally biased toward polar residues. The segment covering 1732–1751 (QQQQQQQQQQQQVAAAAGAA) has biased composition (low complexity).

The chain is FERM and PDZ domain-containing protein 3 from Homo sapiens (Human).